The primary structure comprises 398 residues: Fe-regulated protein 8 (398 aa).

In terms of biological role, protein of unknown function; part of the gene cluster that mediates the biosynthesis of siderophore ferrichrome A which is contributing to organismal virulence. This chain is Fe-regulated protein 8, found in Mycosarcoma maydis (Corn smut fungus).